The chain runs to 166 residues: Transcription factor HES-5 (166 aa).

In terms of domain architecture, bHLH spans 16–72; sequence KNRLRKPVVEKMRRDRINSSIEQLKLLLEQEFARHQPNSKLEKADILEMAVSYLKHS. Residues 88–119 enclose the Orange domain; sequence YSEGYSWCLQEAVQFLTLHAASDTQMKLLYHF. The disordered stretch occupies residues 125–166; sequence PAAPVKETPTPGAAPQPARSSTKAAASVSTSRQSACGLWRPW. Residues 142 to 156 show a composition bias toward low complexity; the sequence is ARSSTKAAASVSTSR. Residues 163-166 carry the WRPW motif motif; that stretch reads WRPW.

Transcription repression requires formation of a complex with a corepressor protein of the Groucho/TLE family. As to expression, expressed predominantly in embryonic neural lineage cells.

The protein localises to the nucleus. Functionally, transcriptional repressor of genes that require a bHLH protein for their transcription. Plays an important role as neurogenesis negative regulator. This chain is Transcription factor HES-5 (Hes5), found in Rattus norvegicus (Rat).